We begin with the raw amino-acid sequence, 470 residues long: tRNA modification GTPase MnmE (470 aa).

Residues Arg-24, Glu-81, and Lys-122 each coordinate (6S)-5-formyl-5,6,7,8-tetrahydrofolate. Residues 218–383 (GIKIVIAGKP…LQEYLSNNIK (166 aa)) enclose the TrmE-type G domain. Asn-228 is a K(+) binding site. GTP is bound by residues 228-233 (NAGKSS), 247-253 (STISGTT), and 272-275 (DTAG). Ser-232 contacts Mg(2+). 3 residues coordinate K(+): Ser-247, Ile-249, and Thr-252. Thr-253 contributes to the Mg(2+) binding site. Residue Lys-470 coordinates (6S)-5-formyl-5,6,7,8-tetrahydrofolate.

The protein belongs to the TRAFAC class TrmE-Era-EngA-EngB-Septin-like GTPase superfamily. TrmE GTPase family. Homodimer. Heterotetramer of two MnmE and two MnmG subunits. K(+) serves as cofactor.

The protein resides in the cytoplasm. Its function is as follows. Exhibits a very high intrinsic GTPase hydrolysis rate. Involved in the addition of a carboxymethylaminomethyl (cmnm) group at the wobble position (U34) of certain tRNAs, forming tRNA-cmnm(5)s(2)U34. The sequence is that of tRNA modification GTPase MnmE from Blochmanniella pennsylvanica (strain BPEN).